Consider the following 540-residue polypeptide: CWF19-like protein 1 (540 aa).

Positions 265–326 (ENPYRKSDKD…AKQPRKHPQP (62 aa)) are disordered. Over residues 267–277 (PYRKSDKDTPK) the composition is skewed to basic and acidic residues.

This sequence belongs to the CWF19 family.

The protein is CWF19-like protein 1 (cwf19l1) of Xenopus laevis (African clawed frog).